The primary structure comprises 190 residues: Elongation factor P-like protein (190 aa).

Belongs to the elongation factor P family.

The polypeptide is Elongation factor P-like protein (Erwinia tasmaniensis (strain DSM 17950 / CFBP 7177 / CIP 109463 / NCPPB 4357 / Et1/99)).